Here is a 673-residue protein sequence, read N- to C-terminus: DNA ligase (673 aa).

NAD(+) contacts are provided by residues 33–37, 83–84, and Glu117; these read DHQYD and SL. Residue Lys119 is the N6-AMP-lysine intermediate of the active site. Residues Arg140, Glu175, Lys282, and Lys306 each contribute to the NAD(+) site. Positions 400, 403, 418, and 424 each coordinate Zn(2+). One can recognise a BRCT domain in the interval 592–673; it reads RGSSAISGKT…WVKMVEDARS (82 aa).

Belongs to the NAD-dependent DNA ligase family. LigA subfamily. Requires Mg(2+) as cofactor. It depends on Mn(2+) as a cofactor.

The enzyme catalyses NAD(+) + (deoxyribonucleotide)n-3'-hydroxyl + 5'-phospho-(deoxyribonucleotide)m = (deoxyribonucleotide)n+m + AMP + beta-nicotinamide D-nucleotide.. Functionally, DNA ligase that catalyzes the formation of phosphodiester linkages between 5'-phosphoryl and 3'-hydroxyl groups in double-stranded DNA using NAD as a coenzyme and as the energy source for the reaction. It is essential for DNA replication and repair of damaged DNA. This is DNA ligase from Anaplasma marginale (strain St. Maries).